Reading from the N-terminus, the 301-residue chain is Nucleosome assembly protein 1;3 (301 aa).

Positions V15–E69 form a coiled coil. A Nuclear export signal motif is present at residues L36–Q51. The disordered stretch occupies residues D278–A301.

This sequence belongs to the nucleosome assembly protein (NAP) family.

Its subcellular location is the nucleus. It localises to the cytoplasm. Functionally, may modulate chromatin structure by regulation of nucleosome assembly/disassembly. This is Nucleosome assembly protein 1;3 (NAP1;3) from Oryza sativa subsp. japonica (Rice).